Here is a 309-residue protein sequence, read N- to C-terminus: Zinc transporter ZIP2 (309 aa).

The Extracellular segment spans residues 1–8; that stretch reads MEVLLGVK. Residues 9–29 form a helical membrane-spanning segment; the sequence is IGCLLALLVLTLGCGLTPIYV. At 30–43 the chain is on the cytoplasmic side; sequence KWFQMDAATGHHHR. A helical membrane pass occupies residues 44–64; sequence VLSLLGCTSAGVFLGAGLMHM. Residues 65 to 103 lie on the Extracellular side of the membrane; that stretch reads TAEALEGIESEIQKFVEQNSTGSKGNSSRDAASSYVEYP. Residues 104–124 traverse the membrane as a helical segment; the sequence is YGELVISLGFFFVFLLESLAL. At 125–164 the chain is on the cytoplasmic side; the sequence is QCCHGAAGGSTVQEEEWGGTHAFGFHKHPAVPSPSRGPLR. A helical membrane pass occupies residues 165–185; sequence ALVLLLSLSFHSVFEGLAVGL. 2 residues coordinate Zn(2+): His-175 and Glu-179. Residues 186–191 are Extracellular-facing; the sequence is QATVAA. Residues 192–212 traverse the membrane as a helical segment; that stretch reads TIQLCVAVLAHKGLVVFSVGL. His-202 lines the Zn(2+) pocket. Topologically, residues 213 to 225 are cytoplasmic; that stretch reads RLGKIGTGPRWAT. A helical transmembrane segment spans residues 226–246; the sequence is FCILSLALMSPVGLALGLTVA. Residues 247–258 are Extracellular-facing; the sequence is GGASGQTQGLAQ. The helical transmembrane segment at 259–279 threads the bilayer; the sequence is AVLEGIAAGTFLYVTFLEILP. Position 276 (Glu-276) interacts with Zn(2+). The Cytoplasmic segment spans residues 280 to 288; sequence RELACPEAP. Residues 289–309 form a helical membrane-spanning segment; sequence LAKYSCVAAGFAFMALIALWA.

Belongs to the ZIP transporter (TC 2.A.5) family. High expression in the liver, skin and ovary.

The protein localises to the cell membrane. The catalysed reaction is Zn(2+)(in) = Zn(2+)(out). The enzyme catalyses Cd(2+)(in) = Cd(2+)(out). Functionally, transporter for the divalent cation Zn(2+). Mediates the influx of Zn(2+) into cells from extracellular space. The Zn(2+) uniporter activity is independent of H(+)-driving force, but is modulated by extracellular pH and membrane potential. Transports also other divalent cations Zn(2+), Cd2(+), Cu2(+), Co2(+) in the order of decreasing affinity, respectively. In the skin, aids in the differentiation of keratinocytes in the epidermis. This Mus musculus (Mouse) protein is Zinc transporter ZIP2 (Slc39a2).